The chain runs to 521 residues: Probable protein kinase UbiB (521 aa).

The region spanning 119-497 (SFDRQPVASA…QKRTNRLLQS (379 aa)) is the Protein kinase domain. ATP contacts are provided by residues 125 to 133 (VASASIAQV) and K151. Catalysis depends on D286, which acts as the Proton acceptor. A helical membrane pass occupies residues 496 to 516 (QSLIYGGLGFVLGLLVMQLFV).

This sequence belongs to the ABC1 family. UbiB subfamily.

The protein localises to the cell inner membrane. It participates in cofactor biosynthesis; ubiquinone biosynthesis [regulation]. Is probably a protein kinase regulator of UbiI activity which is involved in aerobic coenzyme Q (ubiquinone) biosynthesis. The chain is Probable protein kinase UbiB from Acidovorax sp. (strain JS42).